We begin with the raw amino-acid sequence, 209 residues long: Uracil phosphoribosyltransferase (209 aa).

5-phospho-alpha-D-ribose 1-diphosphate contacts are provided by residues arginine 79, arginine 104, and aspartate 131 to serine 139. Residues isoleucine 194 and glycine 199–alanine 201 contribute to the uracil site. Aspartate 200 is a binding site for 5-phospho-alpha-D-ribose 1-diphosphate.

The protein belongs to the UPRTase family. The cofactor is Mg(2+).

The enzyme catalyses UMP + diphosphate = 5-phospho-alpha-D-ribose 1-diphosphate + uracil. The protein operates within pyrimidine metabolism; UMP biosynthesis via salvage pathway; UMP from uracil: step 1/1. With respect to regulation, allosterically activated by GTP. Catalyzes the conversion of uracil and 5-phospho-alpha-D-ribose 1-diphosphate (PRPP) to UMP and diphosphate. The sequence is that of Uracil phosphoribosyltransferase from Bacillus pumilus (strain SAFR-032).